Here is a 375-residue protein sequence, read N- to C-terminus: Queuine tRNA-ribosyltransferase (375 aa).

The active-site Proton acceptor is Asp-90. Substrate-binding positions include 90 to 94 (DSGGF), Asp-144, Gln-190, and Gly-217. An RNA binding region spans residues 248-254 (GIGTPHY). Residue Asp-267 is the Nucleophile of the active site. An RNA binding; important for wobble base 34 recognition region spans residues 272–276 (TRIAR). Zn(2+) is bound by residues Cys-305, Cys-307, Cys-310, and His-336.

The protein belongs to the queuine tRNA-ribosyltransferase family. As to quaternary structure, homodimer. Within each dimer, one monomer is responsible for RNA recognition and catalysis, while the other monomer binds to the replacement base PreQ1. Zn(2+) serves as cofactor.

It catalyses the reaction 7-aminomethyl-7-carbaguanine + guanosine(34) in tRNA = 7-aminomethyl-7-carbaguanosine(34) in tRNA + guanine. It participates in tRNA modification; tRNA-queuosine biosynthesis. In terms of biological role, catalyzes the base-exchange of a guanine (G) residue with the queuine precursor 7-aminomethyl-7-deazaguanine (PreQ1) at position 34 (anticodon wobble position) in tRNAs with GU(N) anticodons (tRNA-Asp, -Asn, -His and -Tyr). Catalysis occurs through a double-displacement mechanism. The nucleophile active site attacks the C1' of nucleotide 34 to detach the guanine base from the RNA, forming a covalent enzyme-RNA intermediate. The proton acceptor active site deprotonates the incoming PreQ1, allowing a nucleophilic attack on the C1' of the ribose to form the product. After dissociation, two additional enzymatic reactions on the tRNA convert PreQ1 to queuine (Q), resulting in the hypermodified nucleoside queuosine (7-(((4,5-cis-dihydroxy-2-cyclopenten-1-yl)amino)methyl)-7-deazaguanosine). The protein is Queuine tRNA-ribosyltransferase of Borrelia hermsii (strain HS1 / DAH).